We begin with the raw amino-acid sequence, 302 residues long: Lipoyl synthase (302 aa).

[4Fe-4S] cluster contacts are provided by C54, C59, C65, C80, C84, C87, and S291. In terms of domain architecture, Radical SAM core spans 66–280 (WSRKTATYML…RIYGKSIGFK (215 aa)).

This sequence belongs to the radical SAM superfamily. Lipoyl synthase family. [4Fe-4S] cluster is required as a cofactor.

The protein localises to the cytoplasm. It catalyses the reaction [[Fe-S] cluster scaffold protein carrying a second [4Fe-4S](2+) cluster] + N(6)-octanoyl-L-lysyl-[protein] + 2 oxidized [2Fe-2S]-[ferredoxin] + 2 S-adenosyl-L-methionine + 4 H(+) = [[Fe-S] cluster scaffold protein] + N(6)-[(R)-dihydrolipoyl]-L-lysyl-[protein] + 4 Fe(3+) + 2 hydrogen sulfide + 2 5'-deoxyadenosine + 2 L-methionine + 2 reduced [2Fe-2S]-[ferredoxin]. Its pathway is protein modification; protein lipoylation via endogenous pathway; protein N(6)-(lipoyl)lysine from octanoyl-[acyl-carrier-protein]: step 2/2. Functionally, catalyzes the radical-mediated insertion of two sulfur atoms into the C-6 and C-8 positions of the octanoyl moiety bound to the lipoyl domains of lipoate-dependent enzymes, thereby converting the octanoylated domains into lipoylated derivatives. The polypeptide is Lipoyl synthase (Leptospira borgpetersenii serovar Hardjo-bovis (strain JB197)).